The primary structure comprises 253 residues: Tryptophan synthase alpha chain (253 aa).

Active-site proton acceptor residues include Glu47 and Asp58.

The protein belongs to the TrpA family. Tetramer of two alpha and two beta chains.

It catalyses the reaction (1S,2R)-1-C-(indol-3-yl)glycerol 3-phosphate + L-serine = D-glyceraldehyde 3-phosphate + L-tryptophan + H2O. The protein operates within amino-acid biosynthesis; L-tryptophan biosynthesis; L-tryptophan from chorismate: step 5/5. Its function is as follows. The alpha subunit is responsible for the aldol cleavage of indoleglycerol phosphate to indole and glyceraldehyde 3-phosphate. The chain is Tryptophan synthase alpha chain from Lactococcus lactis subsp. cremoris (strain SK11).